The following is a 314-amino-acid chain: 4-hydroxy-3-methylbut-2-enyl diphosphate reductase (314 aa).

Cysteine 12 contributes to the [4Fe-4S] cluster binding site. Positions 43 and 81 each coordinate (2E)-4-hydroxy-3-methylbut-2-enyl diphosphate. 2 residues coordinate dimethylallyl diphosphate: histidine 43 and histidine 81. 2 residues coordinate isopentenyl diphosphate: histidine 43 and histidine 81. Cysteine 103 serves as a coordination point for [4Fe-4S] cluster. Histidine 131 contacts (2E)-4-hydroxy-3-methylbut-2-enyl diphosphate. Residue histidine 131 coordinates dimethylallyl diphosphate. Residue histidine 131 participates in isopentenyl diphosphate binding. The Proton donor role is filled by glutamate 133. Threonine 170 contacts (2E)-4-hydroxy-3-methylbut-2-enyl diphosphate. Cysteine 198 contributes to the [4Fe-4S] cluster binding site. The (2E)-4-hydroxy-3-methylbut-2-enyl diphosphate site is built by serine 226, asparagine 228, and serine 271. Residues serine 226, asparagine 228, and serine 271 each coordinate dimethylallyl diphosphate. Positions 226, 228, and 271 each coordinate isopentenyl diphosphate.

Belongs to the IspH family. It depends on [4Fe-4S] cluster as a cofactor.

It carries out the reaction isopentenyl diphosphate + 2 oxidized [2Fe-2S]-[ferredoxin] + H2O = (2E)-4-hydroxy-3-methylbut-2-enyl diphosphate + 2 reduced [2Fe-2S]-[ferredoxin] + 2 H(+). It catalyses the reaction dimethylallyl diphosphate + 2 oxidized [2Fe-2S]-[ferredoxin] + H2O = (2E)-4-hydroxy-3-methylbut-2-enyl diphosphate + 2 reduced [2Fe-2S]-[ferredoxin] + 2 H(+). It participates in isoprenoid biosynthesis; dimethylallyl diphosphate biosynthesis; dimethylallyl diphosphate from (2E)-4-hydroxy-3-methylbutenyl diphosphate: step 1/1. Its pathway is isoprenoid biosynthesis; isopentenyl diphosphate biosynthesis via DXP pathway; isopentenyl diphosphate from 1-deoxy-D-xylulose 5-phosphate: step 6/6. In terms of biological role, catalyzes the conversion of 1-hydroxy-2-methyl-2-(E)-butenyl 4-diphosphate (HMBPP) into a mixture of isopentenyl diphosphate (IPP) and dimethylallyl diphosphate (DMAPP). Acts in the terminal step of the DOXP/MEP pathway for isoprenoid precursor biosynthesis. In Bacillus velezensis (strain DSM 23117 / BGSC 10A6 / LMG 26770 / FZB42) (Bacillus amyloliquefaciens subsp. plantarum), this protein is 4-hydroxy-3-methylbut-2-enyl diphosphate reductase.